The sequence spans 211 residues: Abscisic acid receptor PYL7 (211 aa).

The START-like stretch occupies residues 29–180 (HHCRENQCTS…NLKSLACVSE (152 aa)). 2 disulfide bridges follow: Cys-31–Cys-161 and Cys-36–Cys-161. Abscisate is bound by residues Lys-65, 93-98 (ATTSTE), 120-126 (RLKNYSS), and Glu-145. The short motif at 89–93 (SGLPA) is the Gate loop element. Positions 119-121 (HRL) match the Latch loop motif.

Belongs to the PYR/PYL/RCAR abscisic acid intracellular receptor family. Homodimer. Binds ABA on one subunit only. Binds to CARs protein in an ABA-independent manner, both at the plasma membrane and in the nucleus. Interacts with ABI1, and possibly with other PP2Cs.

The protein localises to the cytoplasm. It localises to the nucleus. Its subcellular location is the cell membrane. Its function is as follows. Receptor for abscisic acid (ABA) required for ABA-mediated responses such as stomatal closure and germination inhibition. Inhibits the activity of group-A protein phosphatases type 2C (PP2Cs) when activated by ABA. The chain is Abscisic acid receptor PYL7 (PYL7) from Arabidopsis thaliana (Mouse-ear cress).